The following is a 600-amino-acid chain: Calcium/calmodulin-dependent serine/threonine-protein kinase 1 (600 aa).

Positions 1-99 (MGLCHGKSAA…GGFKRPFPPP (99 aa)) are disordered. The segment covering 24 to 56 (TRVAEAAAAPAKPASPAPSAAAAAAAPAKPGTP) has biased composition (low complexity). Residues 74 to 85 (YKGSPANSSVAS) are compositionally biased toward polar residues. One can recognise a Protein kinase domain in the interval 147–409 (YELGREVGRG…AAQALCHPWI (263 aa)). Residues 153 to 161 (VGRGHFGYT) and K179 each bind ATP. Residue D275 is the Proton acceptor of the active site.

It belongs to the protein kinase superfamily. Ser/Thr protein kinase family. Post-translationally, autophosphorylated. Highly expressed in roots in the zone of cell division. Expressed in leaf mesophyll cells and at lower levels in mature stems.

It catalyses the reaction L-seryl-[protein] + ATP = O-phospho-L-seryl-[protein] + ADP + H(+). The enzyme catalyses L-threonyl-[protein] + ATP = O-phospho-L-threonyl-[protein] + ADP + H(+). With respect to regulation, activated by the binding of calmodulin-like protein 1 (CML1) in the presence of Ca(2+). In terms of biological role, possesses kinase activity in vitro. This is Calcium/calmodulin-dependent serine/threonine-protein kinase 1 (CAMK1) from Oryza sativa subsp. japonica (Rice).